Consider the following 213-residue polypeptide: Putative thiamine-phosphate synthase (213 aa).

Residues 38 to 42 (QLREK) and N70 each bind 4-amino-2-methyl-5-(diphosphooxymethyl)pyrimidine. Residue D71 coordinates Mg(2+). S109 contributes to the 4-amino-2-methyl-5-(diphosphooxymethyl)pyrimidine binding site. 135 to 137 (TPS) is a 2-[(2R,5Z)-2-carboxy-4-methylthiazol-5(2H)-ylidene]ethyl phosphate binding site. Residue K138 coordinates 4-amino-2-methyl-5-(diphosphooxymethyl)pyrimidine. 2-[(2R,5Z)-2-carboxy-4-methylthiazol-5(2H)-ylidene]ethyl phosphate is bound by residues G166 and 186–187 (IS).

It belongs to the thiamine-phosphate synthase family. Requires Mg(2+) as cofactor.

The catalysed reaction is 2-[(2R,5Z)-2-carboxy-4-methylthiazol-5(2H)-ylidene]ethyl phosphate + 4-amino-2-methyl-5-(diphosphooxymethyl)pyrimidine + 2 H(+) = thiamine phosphate + CO2 + diphosphate. It catalyses the reaction 2-(2-carboxy-4-methylthiazol-5-yl)ethyl phosphate + 4-amino-2-methyl-5-(diphosphooxymethyl)pyrimidine + 2 H(+) = thiamine phosphate + CO2 + diphosphate. It carries out the reaction 4-methyl-5-(2-phosphooxyethyl)-thiazole + 4-amino-2-methyl-5-(diphosphooxymethyl)pyrimidine + H(+) = thiamine phosphate + diphosphate. The protein operates within cofactor biosynthesis; thiamine diphosphate biosynthesis; thiamine phosphate from 4-amino-2-methyl-5-diphosphomethylpyrimidine and 4-methyl-5-(2-phosphoethyl)-thiazole: step 1/1. Its function is as follows. Condenses 4-methyl-5-(beta-hydroxyethyl)thiazole monophosphate (THZ-P) and 2-methyl-4-amino-5-hydroxymethyl pyrimidine pyrophosphate (HMP-PP) to form thiamine monophosphate (TMP). This is Putative thiamine-phosphate synthase (thiE) from Geobacter sulfurreducens (strain ATCC 51573 / DSM 12127 / PCA).